Consider the following 222-residue polypeptide: Endonuclease V (222 aa).

Aspartate 34 and aspartate 102 together coordinate Mg(2+).

It belongs to the endonuclease V family. The cofactor is Mg(2+).

The protein localises to the cytoplasm. The enzyme catalyses Endonucleolytic cleavage at apurinic or apyrimidinic sites to products with a 5'-phosphate.. Functionally, DNA repair enzyme involved in the repair of deaminated bases. Selectively cleaves double-stranded DNA at the second phosphodiester bond 3' to a deoxyinosine leaving behind the intact lesion on the nicked DNA. The sequence is that of Endonuclease V from Proteus mirabilis (strain HI4320).